The primary structure comprises 519 residues: Asteroid homolog 1 (519 aa).

The protein belongs to the asteroid family.

Its subcellular location is the cytoplasm. The protein resides in the mitochondrion. The chain is Asteroid homolog 1 (ast1) from Schizosaccharomyces pombe (strain 972 / ATCC 24843) (Fission yeast).